An 860-amino-acid polypeptide reads, in one-letter code: Leucine--tRNA ligase (860 aa).

Residues P42–H52 carry the 'HIGH' region motif. The 'KMSKS' region motif lies at K619–S623. K622 provides a ligand contact to ATP.

The protein belongs to the class-I aminoacyl-tRNA synthetase family.

The protein resides in the cytoplasm. The catalysed reaction is tRNA(Leu) + L-leucine + ATP = L-leucyl-tRNA(Leu) + AMP + diphosphate. The sequence is that of Leucine--tRNA ligase from Escherichia coli O7:K1 (strain IAI39 / ExPEC).